Consider the following 349-residue polypeptide: Crinkler effector protein 5 (349 aa).

Residues 1–17 (MVKLFCSIVGVAGSPFS) form the signal peptide. Positions 18-57 (VEVNEGKTVDDLKKAIKAENLDDPTLRNVAPKNLQLFLAK) are LQLFLAK domain. The tract at residues 58-108 (KGDAWLRYNEDLDTYLQSEIDTSSYLHMRASWKLSKPTLFGPDVSLGEDVV) is DWL domain. The HVLVXXP motif signature appears at 109–115 (HVLVVVP).

This sequence belongs to the Crinkler effector family.

The protein localises to the secreted. It is found in the host nucleus. Its function is as follows. Secreted effector that elicits necrosis in host plants, a characteristic of plant innate immunity. The sequence is that of Crinkler effector protein 5 from Phytophthora infestans (Potato late blight agent).